A 96-amino-acid polypeptide reads, in one-letter code: RxLR effector protein PITG_11507 (96 aa).

The signal sequence occupies residues 1-19 (MRLSFIIVAVSLLAGGSGA). The interval 27-59 (SDVLTSRGTNEGARTGKRSLRYDSNVERTGEED) is disordered. The short motif at 44-59 (RSLRYDSNVERTGEED) is the RxLR-dEER element. A compositionally biased stretch (basic and acidic residues) spans 46-55 (LRYDSNVERT).

Belongs to the RxLR effector family.

It localises to the secreted. Its subcellular location is the host nucleus. It is found in the host cytoplasm. Its function is as follows. Effector that enhances P.infestans colonization of Nicotiana benthamiana leaves. The chain is RxLR effector protein PITG_11507 from Phytophthora infestans (strain T30-4) (Potato late blight agent).